The chain runs to 379 residues: Copper-containing nitrite reductase (379 aa).

The segment at residues M1–A32 is a signal peptide (tat-type signal). Plastocyanin-like domains are found at residues E33–V214 and Y215–G379. Cu cation contacts are provided by H134, H139, H174, C175, H184, M189, and H345.

It belongs to the multicopper oxidase family. As to quaternary structure, homotrimer. Requires Cu(2+) as cofactor. Cu(+) is required as a cofactor. FAD serves as cofactor. Post-translationally, predicted to be exported by the Tat system. The position of the signal peptide cleavage has not been experimentally proven.

The protein localises to the periplasm. The enzyme catalyses nitric oxide + Fe(III)-[cytochrome c] + H2O = Fe(II)-[cytochrome c] + nitrite + 2 H(+). It functions in the pathway nitrogen metabolism; nitrate reduction (denitrification); dinitrogen from nitrate: step 2/4. The protein is Copper-containing nitrite reductase (nirU) of Neorhizobium galegae (Rhizobium galegae).